We begin with the raw amino-acid sequence, 939 residues long: cGMP-dependent 3',5'-cyclic phosphodiesterase (939 aa).

G2 is lipidated: N-myristoyl glycine. S-palmitoyl cysteine attachment occurs at residues C5 and C11. The segment at 16 to 38 (YPAARPAEPRGQQVFLKPDEPPP) is disordered. S116 is subject to Phosphoserine. Residues 197 to 217 (PEAVQNTSVDASEDQKDEKGY) form a disordered region. GAF domains lie at 236-373 (ATSL…HYTG) and 408-547 (DVSV…GISI). Residues S430, D445, I464, Y487, and T498 each coordinate 3',5'-cyclic GMP. In terms of domain architecture, PDEase spans 577–901 (SDDEYTKLLH…EHWTKVSHKF (325 aa)). Catalysis depends on H655, which acts as the Proton donor. Zn(2+)-binding residues include H659, H695, D696, and D807. D696 is a Mg(2+) binding site.

The protein belongs to the cyclic nucleotide phosphodiesterase family. PDE2 subfamily. Homodimer. The cofactor is Zn(2+). Mg(2+) serves as cofactor. As to expression, expressed in brain and liver (at protein level).

The protein resides in the cytoplasm. The protein localises to the mitochondrion matrix. Its subcellular location is the mitochondrion inner membrane. It localises to the mitochondrion outer membrane. It is found in the cell membrane. The catalysed reaction is a nucleoside 3',5'-cyclic phosphate + H2O = a nucleoside 5'-phosphate + H(+). The enzyme catalyses 3',5'-cyclic GMP + H2O = GMP + H(+). It carries out the reaction 3',5'-cyclic AMP + H2O = AMP + H(+). Its activity is regulated as follows. The 3',5'-cyclic-AMP phosphodiesterase activity is stimulated by 3',5'-cyclic GMP. Specifically inhibited by Bay 60-7550. CGMP-activated cyclic nucleotide phosphodiesterase with a dual-specificity for the second messengers cAMP and cGMP, which are key regulators of many important physiological processes. Has a higher efficiency with cGMP compared to cAMP. Plays a role in cell growth and migration. In terms of biological role, regulates mitochondrial cAMP levels and respiration. Involved in the regulation of mitochondria morphology/dynamics and apoptotic cell death via local modulation of cAMP/PKA signaling in the mitochondrion, including the monitoring of local cAMP levels at the outer mitochondrial membrane and of PKA-dependent phosphorylation of DNM1L. The sequence is that of cGMP-dependent 3',5'-cyclic phosphodiesterase from Mus musculus (Mouse).